Here is a 177-residue protein sequence, read N- to C-terminus: KxDL motif-containing protein 1 (177 aa).

Met-1 is modified (N-acetylmethionine). The segment at 100–177 is disordered; that stretch reads SHIPEGSFLE…TDDEEETHEE (78 aa). The span at 125–145 shows a compositional bias: polar residues; that stretch reads ATSEQSTGSCDTSPDTVSPSL.

The protein belongs to the KXD1 family. In terms of assembly, component of the BLOC-one-related complex (BORC) which is composed of BLOC1S1, BLOC1S2, BORCS5, BORCS6, BORCS7, BORCS8, KXD1 and SNAPIN. Associates with the BLOC-1 complex. Interacts with BLOC1S1. Interacts with DTNBP1/BLOC1S7 (via coiled-coil domain). Widely expressed.

Its subcellular location is the lysosome membrane. Functionally, as part of the BORC complex may play a role in lysosomes movement and localization at the cell periphery. Associated with the cytosolic face of lysosomes, the BORC complex may recruit ARL8B and couple lysosomes to microtubule plus-end-directed kinesin motor. May also be involved in the biogenesis of lysosome-related organelles such as melanosomes. In Mus musculus (Mouse), this protein is KxDL motif-containing protein 1 (Kxd1).